The chain runs to 226 residues: Cytochrome c oxidase subunit 2 (226 aa).

The Mitochondrial intermembrane portion of the chain corresponds to 1 to 14 (MAYPLQLGLQDATS). The helical transmembrane segment at 15 to 45 (PIMEELTSFHDHTLMIVFLISTLVLYIISLM) threads the bilayer. Residues 46–59 (LTTKLTHTSTMDAQ) are Mitochondrial matrix-facing. A helical membrane pass occupies residues 60 to 87 (EIETIWTILPAIILIMIALPSLRVLYMM). Over 88 to 226 (DEINNPALTV…KYFEAWSASM (139 aa)) the chain is Mitochondrial intermembrane. Cu cation contacts are provided by His161, Cys196, Glu198, Cys200, His204, and Met207. Glu198 contributes to the Mg(2+) binding site. Tyr218 is subject to Phosphotyrosine.

It belongs to the cytochrome c oxidase subunit 2 family. Component of the cytochrome c oxidase (complex IV, CIV), a multisubunit enzyme composed of 14 subunits. The complex is composed of a catalytic core of 3 subunits MT-CO1, MT-CO2 and MT-CO3, encoded in the mitochondrial DNA, and 11 supernumerary subunits COX4I, COX5A, COX5B, COX6A, COX6B, COX6C, COX7A, COX7B, COX7C, COX8 and NDUFA4, which are encoded in the nuclear genome. The complex exists as a monomer or a dimer and forms supercomplexes (SCs) in the inner mitochondrial membrane with NADH-ubiquinone oxidoreductase (complex I, CI) and ubiquinol-cytochrome c oxidoreductase (cytochrome b-c1 complex, complex III, CIII), resulting in different assemblies (supercomplex SCI(1)III(2)IV(1) and megacomplex MCI(2)III(2)IV(2)). Found in a complex with TMEM177, COA6, COX18, COX20, SCO1 and SCO2. Interacts with TMEM177 in a COX20-dependent manner. Interacts with COX20. Interacts with COX16. The cofactor is Cu cation.

The protein localises to the mitochondrion inner membrane. It catalyses the reaction 4 Fe(II)-[cytochrome c] + O2 + 8 H(+)(in) = 4 Fe(III)-[cytochrome c] + 2 H2O + 4 H(+)(out). Functionally, component of the cytochrome c oxidase, the last enzyme in the mitochondrial electron transport chain which drives oxidative phosphorylation. The respiratory chain contains 3 multisubunit complexes succinate dehydrogenase (complex II, CII), ubiquinol-cytochrome c oxidoreductase (cytochrome b-c1 complex, complex III, CIII) and cytochrome c oxidase (complex IV, CIV), that cooperate to transfer electrons derived from NADH and succinate to molecular oxygen, creating an electrochemical gradient over the inner membrane that drives transmembrane transport and the ATP synthase. Cytochrome c oxidase is the component of the respiratory chain that catalyzes the reduction of oxygen to water. Electrons originating from reduced cytochrome c in the intermembrane space (IMS) are transferred via the dinuclear copper A center (CU(A)) of subunit 2 and heme A of subunit 1 to the active site in subunit 1, a binuclear center (BNC) formed by heme A3 and copper B (CU(B)). The BNC reduces molecular oxygen to 2 water molecules using 4 electrons from cytochrome c in the IMS and 4 protons from the mitochondrial matrix. The protein is Cytochrome c oxidase subunit 2 (MT-CO2) of Perognathus flavus (Silky pocket mouse).